A 156-amino-acid polypeptide reads, in one-letter code: Arginine repressor (156 aa).

This sequence belongs to the ArgR family.

It is found in the cytoplasm. The protein operates within amino-acid biosynthesis; L-arginine biosynthesis [regulation]. In terms of biological role, regulates arginine biosynthesis genes. The chain is Arginine repressor from Shigella boydii serotype 18 (strain CDC 3083-94 / BS512).